The primary structure comprises 192 residues: uncharacterized protein (192 aa).

The region spanning 29–160 (HRQAAVLIPI…PLDIYRRGDS (132 aa)) is the Nudix hydrolase domain. Positions 67–89 (GAVDDTDTSVIAAALREAEEEVA) match the Nudix box motif. The Mg(2+) site is built by Glu-83 and Glu-87.

The protein belongs to the Nudix hydrolase family. PCD1 subfamily. It depends on Mn(2+) as a cofactor. Mg(2+) serves as cofactor.

Functionally, probably mediates the hydrolysis of some nucleoside diphosphate derivatives. This is an uncharacterized protein from Escherichia fergusonii (strain ATCC 35469 / DSM 13698 / CCUG 18766 / IAM 14443 / JCM 21226 / LMG 7866 / NBRC 102419 / NCTC 12128 / CDC 0568-73).